A 321-amino-acid polypeptide reads, in one-letter code: Lipoyl synthase (321 aa).

Cys60, Cys65, Cys71, Cys86, Cys90, Cys93, and Ser299 together coordinate [4Fe-4S] cluster. Residues 72-288 enclose the Radical SAM core domain; the sequence is WEKKHATFMI…ETIGRTKGFL (217 aa).

Belongs to the radical SAM superfamily. Lipoyl synthase family. Requires [4Fe-4S] cluster as cofactor.

Its subcellular location is the cytoplasm. It carries out the reaction [[Fe-S] cluster scaffold protein carrying a second [4Fe-4S](2+) cluster] + N(6)-octanoyl-L-lysyl-[protein] + 2 oxidized [2Fe-2S]-[ferredoxin] + 2 S-adenosyl-L-methionine + 4 H(+) = [[Fe-S] cluster scaffold protein] + N(6)-[(R)-dihydrolipoyl]-L-lysyl-[protein] + 4 Fe(3+) + 2 hydrogen sulfide + 2 5'-deoxyadenosine + 2 L-methionine + 2 reduced [2Fe-2S]-[ferredoxin]. It participates in protein modification; protein lipoylation via endogenous pathway; protein N(6)-(lipoyl)lysine from octanoyl-[acyl-carrier-protein]: step 2/2. Its function is as follows. Catalyzes the radical-mediated insertion of two sulfur atoms into the C-6 and C-8 positions of the octanoyl moiety bound to the lipoyl domains of lipoate-dependent enzymes, thereby converting the octanoylated domains into lipoylated derivatives. The protein is Lipoyl synthase of Mesorhizobium japonicum (strain LMG 29417 / CECT 9101 / MAFF 303099) (Mesorhizobium loti (strain MAFF 303099)).